Here is a 357-residue protein sequence, read N- to C-terminus: Glutamyl endopeptidase (357 aa).

A signal peptide spans 1–29; the sequence is MKGKFLKVSSLFVATLTTATLVSSPAANA. The propeptide occupies 30 to 68; it reads LSSKAMDNHPQQTQTDKQQTPKIQKGGNLKPLEQRERAN. The disordered stretch occupies residues 33–58; the sequence is KAMDNHPQQTQTDKQQTPKIQKGGNL. Over residues 40–54 the composition is skewed to low complexity; that stretch reads QQTQTDKQQTPKIQK. Active-site charge relay system residues include His119, Asp161, and Ser237. Positions 282-357 are disordered; it reads NFANDDHPNN…NNNSDNPDAA (76 aa). 18 repeat units span residues 289 to 291, 292 to 294, 295 to 297, 298 to 300, 301 to 303, 304 to 306, 307 to 309, 310 to 312, 313 to 315, 316 to 318, 319 to 321, 322 to 324, 325 to 327, 328 to 330, 331 to 333, 337 to 339, 340 to 342, and 343 to 345. Positions 289 to 345 are 18 X 3 AA repeats of P-[DN]-N; it reads PNNPDNPDNPNNPDNPNNPDNPNNPDNPDNPNNPDNPNNPDNPNNPDQPNNPNNPDN. The span at 291-357 shows a compositional bias: low complexity; it reads NPDNPDNPNN…NNNSDNPDAA (67 aa).

The protein belongs to the peptidase S1B family. Post-translationally, proteolytically cleaved by aureolysin (aur). This cleavage leads to the activation of SspA.

Its subcellular location is the secreted. The catalysed reaction is Preferential cleavage: Glu-|-Xaa, Asp-|-Xaa.. Preferentially cleaves peptide bonds on the carboxyl-terminal side of aspartate and glutamate. Along with other extracellular proteases it is involved in colonization and infection of human tissues. Required for proteolytic maturation of thiol protease SspB and inactivation of SspC, an inhibitor of SspB. It is the most important protease for degradation of fibronectin-binding protein (FnBP) and surface protein A, which are involved in adherence to host cells. May also protect bacteria against host defense mechanism by cleaving the immunoglobulin classes IgG, IgA and IgM. May be involved in the stability of secreted lipases. This chain is Glutamyl endopeptidase (sspA), found in Staphylococcus aureus (strain MRSA252).